Here is a 257-residue protein sequence, read N- to C-terminus: MLTLLSPAKKLLSISKHYSKKTSNPLLLDKALELVKIMKLKSAEQIADLMDLSRQLAELNYERYQNFDLKNNPMNHSYPALFLFQGDVYQGLNANSWKDEEIEYAQSHLGILSGLYGFLRPLDRIQPYRLEMGVKLENPAGKNLYAFWSKIVTNILNQILAEQSNPVLINLASTEYFKVVDEKKLSYPLVTINFYEQKNSELKMIGILAKKARGMMAKYIMQNRIDSIEQIKEFSESGYLFNKEISSPNSLNFIRIH.

Belongs to the UPF0246 family.

This chain is UPF0246 protein lpl1317, found in Legionella pneumophila (strain Lens).